The sequence spans 689 residues: Glycine--tRNA ligase beta subunit (689 aa).

This sequence belongs to the class-II aminoacyl-tRNA synthetase family. Tetramer of two alpha and two beta subunits.

It is found in the cytoplasm. The catalysed reaction is tRNA(Gly) + glycine + ATP = glycyl-tRNA(Gly) + AMP + diphosphate. The chain is Glycine--tRNA ligase beta subunit from Salmonella typhi.